Consider the following 553-residue polypeptide: Cytochrome P450 monooxygenase alnD (553 aa).

The chain crosses the membrane as a helical span at residues 351–371 (LVGAGFVTSSAFLSWLIYSLV). Cys-493 serves as a coordination point for heme. Asn-518 carries N-linked (GlcNAc...) asparagine glycosylation.

The protein belongs to the cytochrome P450 family. It depends on heme as a cofactor.

It is found in the membrane. It participates in polyketide biosynthesis. Its function is as follows. Cytochrome P450 monooxygenase; part of the gene cluster that mediates the biosynthesis of asperlin, a polyketide showing anti-inflammatory, antitumor and antibiotic activities. The first step of the asperlin biosynthesis is the production of the intermediate 2,4,6-octatrienoic acid by the highly redusing polyketide synthase alnA with cleavage of the PKS product by the esterase alnB. 2,4,6-octatrienoic acid is further converted to asperlin via several steps involving the remaining enzymes from the cluster. This Emericella nidulans (strain FGSC A4 / ATCC 38163 / CBS 112.46 / NRRL 194 / M139) (Aspergillus nidulans) protein is Cytochrome P450 monooxygenase alnD.